A 258-amino-acid polypeptide reads, in one-letter code: Myelin proteolipid protein (258 aa).

At 1–22 the chain is on the cytoplasmic side; the sequence is MFPVRHALLCKALGCYDCCIRC. 3 S-palmitoyl cysteine lipidation sites follow: Cys18, Cys19, and Cys22. The helical transmembrane segment at 23 to 48 threads the bilayer; the sequence is LGAVPYPSLVSTLLCFTGMALFCGCG. At 49-82 the chain is on the extracellular side; that stretch reads HEALAHTEVLVETYFVRNIQDYVILASFIKYFQY. Residues 83–103 traverse the membrane as a helical segment; sequence VIYGLASFFFLYCILLLAEGF. Residues 104–128 lie on the Cytoplasmic side of the membrane; that stretch reads YTTSAVKQTFGEFRSTRCGRCLSLT. 2 S-palmitoyl cysteine lipidation sites follow: Cys121 and Cys124. The chain crosses the membrane as a helical span at residues 129–149; that stretch reads FIIVTYVLAVIWLAVFAFTAI. Residues 150–218 lie on the Extracellular side of the membrane; sequence PSSSSLIWHR…KTKEFFVTYD (69 aa). A disulfide bridge links Cys181 with Cys200. Residues 219–239 traverse the membrane as a helical segment; it reads LYIAAFAGAGIALLALFLYVV. Topologically, residues 240–258 are cytoplasmic; the sequence is ATTYNYAVLRFLGRKGLRC.

This sequence belongs to the myelin proteolipid protein family. Central nervous system. Highest levels in spinal cord and medulla oblongata.

The protein resides in the cell membrane. Functionally, this is the major myelin protein from the central nervous system. It plays an important role in the formation or maintenance of the multilamellar structure of myelin. May be involved in neuron and glial cell differentiation. This is Myelin proteolipid protein (plp) from Oncorhynchus mykiss (Rainbow trout).